The following is a 393-amino-acid chain: NAD(P)H-quinone oxidoreductase subunit H, chloroplastic (393 aa).

It belongs to the complex I 49 kDa subunit family. As to quaternary structure, NDH is composed of at least 16 different subunits, 5 of which are encoded in the nucleus.

It localises to the plastid. The protein localises to the chloroplast thylakoid membrane. The catalysed reaction is a plastoquinone + NADH + (n+1) H(+)(in) = a plastoquinol + NAD(+) + n H(+)(out). It carries out the reaction a plastoquinone + NADPH + (n+1) H(+)(in) = a plastoquinol + NADP(+) + n H(+)(out). Functionally, NDH shuttles electrons from NAD(P)H:plastoquinone, via FMN and iron-sulfur (Fe-S) centers, to quinones in the photosynthetic chain and possibly in a chloroplast respiratory chain. The immediate electron acceptor for the enzyme in this species is believed to be plastoquinone. Couples the redox reaction to proton translocation, and thus conserves the redox energy in a proton gradient. In Oenothera argillicola (Appalachian evening primrose), this protein is NAD(P)H-quinone oxidoreductase subunit H, chloroplastic.